A 431-amino-acid polypeptide reads, in one-letter code: Serine/threonine-protein kinase Sgk1 (431 aa).

A necessary for localization to the mitochondria region spans residues 1 to 60 (MTVKTEAARGPLTYSRMRGMVAILIAFMKQRRMGLNDFIQKIANNSYACKHTEVQSILKI). Residues 66-92 (PELMNANPSPPPSPSQQINLGPSSNPH) form a disordered region. Position 74 is a phosphoserine (S74). Position 78 is a phosphoserine; by MAPK7 (S78). Residues 81–91 (QQINLGPSSNP) show a composition bias toward polar residues. The Protein kinase domain maps to 98–355 (FHFLKVIGKG…FMEIRNHVFF (258 aa)). ATP-binding positions include 104–112 (IGKGSFGKV) and K127. The short motif at 131 to 141 (KKAILKKKEEK) is the Nuclear localization signal element. D222 serves as the catalytic Proton acceptor. The residue at position 256 (T256) is a Phosphothreonine; by PDPK1. In terms of domain architecture, AGC-kinase C-terminal spans 356–431 (SLINWDDLIN…SYAPPMDSFL (76 aa)). Position 369 is a phosphothreonine; by PKA (T369). Residues S397, S401, and S422 each carry the phosphoserine modification.

The protein belongs to the protein kinase superfamily. AGC Ser/Thr protein kinase family. In terms of assembly, homodimer; disulfide-linked. Forms a trimeric complex with FBXW7 and NOTCH1. Interacts with MAPK3/ERK1, MAPK1/ERK2, MAP2K1/MEK1, MAP2K2/MEK2, NEDD4, NEDD4L, MAPT/TAU, MAPK7, CREB1, SLC9A3R2/NHERF2 and KCNJ1/ROMK1. Associates with the mammalian target of rapamycin complex 2 (mTORC2) via an interaction with MAPKAP1/SIN1. In terms of processing, regulated by phosphorylation. Activated by phosphorylation on Ser-422 by mTORC2, transforming it into a substrate for PDPK1 which phosphorylates it on Thr-256. Phosphorylation on Ser-397 and Ser-401 are also essential for its activity. Phosphorylation on Ser-78 by MAPK7 is required for growth factor-induced cell cycle progression. Ubiquitinated by NEDD4L; which promotes proteasomal degradation. Ubiquitinated by SYVN1 at the endoplasmic reticulum; which promotes rapid proteasomal degradation and maintains a high turnover rate in resting cells.

The protein resides in the cytoplasm. It localises to the nucleus. The protein localises to the endoplasmic reticulum membrane. It is found in the cell membrane. Its subcellular location is the mitochondrion. The enzyme catalyses L-seryl-[protein] + ATP = O-phospho-L-seryl-[protein] + ADP + H(+). It carries out the reaction L-threonyl-[protein] + ATP = O-phospho-L-threonyl-[protein] + ADP + H(+). Its activity is regulated as follows. Two specific sites, one in the kinase domain (Thr-256) and the other in the C-terminal regulatory region (Ser-422), need to be phosphorylated for its full activation. Phosphorylation at Ser-397 and Ser-401 are also essential for its activity. Activated by WNK1, WNK2, WNK3 and WNK4; which promote phosphorylation by mTORC2. Serine/threonine-protein kinase which is involved in the regulation of a wide variety of ion channels, membrane transporters, cellular enzymes, transcription factors, neuronal excitability, cell growth, proliferation, survival, migration and apoptosis. Plays an important role in cellular stress response. Contributes to regulation of renal Na(+) retention, renal K(+) elimination, salt appetite, gastric acid secretion, intestinal Na(+)/H(+) exchange and nutrient transport, insulin-dependent salt sensitivity of blood pressure, salt sensitivity of peripheral glucose uptake, cardiac repolarization and memory consolidation. Up-regulates Na(+) channels: SCNN1A/ENAC, SCN5A and ASIC1/ACCN2, K(+) channels: KCNJ1/ROMK1, KCNA1-5, KCNQ1-5 and KCNE1, epithelial Ca(2+) channels: TRPV5 and TRPV6, chloride channels: BSND, CLCN2 and CFTR, glutamate transporters: SLC1A3/EAAT1, SLC1A2 /EAAT2, SLC1A1/EAAT3, SLC1A6/EAAT4 and SLC1A7/EAAT5, amino acid transporters: SLC1A5/ASCT2, SLC38A1/SN1 and SLC6A19, creatine transporter: SLC6A8, Na(+)/dicarboxylate cotransporter: SLC13A2/NADC1, Na(+)-dependent phosphate cotransporter: SLC34A2/NAPI-2B, glutamate receptor: GRIK2/GLUR6. Up-regulates carriers: SLC9A3/NHE3, SLC12A1/NKCC2, SLC12A3/NCC, SLC5A3/SMIT, SLC2A1/GLUT1, SLC5A1/SGLT1 and SLC15A2/PEPT2. Regulates enzymes: GSK3A/B, PMM2 and Na(+)/K(+) ATPase, and transcription factors: CTNNB1 and nuclear factor NF-kappa-B. Stimulates sodium transport into epithelial cells by enhancing the stability and expression of SCNN1A/ENAC. This is achieved by phosphorylating the NEDD4L ubiquitin E3 ligase, promoting its interaction with 14-3-3 proteins, thereby preventing it from binding to SCNN1A/ENAC and targeting it for degradation. Regulates store-operated Ca(+2) entry (SOCE) by stimulating ORAI1 and STIM1. Regulates KCNJ1/ROMK1 directly via its phosphorylation or indirectly via increased interaction with SLC9A3R2/NHERF2. Phosphorylates MDM2 and activates MDM2-dependent ubiquitination of p53/TP53. Phosphorylates MAPT/TAU and mediates microtubule depolymerization and neurite formation in hippocampal neurons. Phosphorylates SLC2A4/GLUT4 and up-regulates its activity. Phosphorylates APBB1/FE65 and promotes its localization to the nucleus. Phosphorylates MAPK1/ERK2 and activates it by enhancing its interaction with MAP2K1/MEK1 and MAP2K2/MEK2. Phosphorylates FBXW7 and plays an inhibitory role in the NOTCH1 signaling. Phosphorylates FOXO1 resulting in its relocalization from the nucleus to the cytoplasm. Phosphorylates FOXO3, promoting its exit from the nucleus and interference with FOXO3-dependent transcription. Phosphorylates BRAF and MAP3K3/MEKK3 and inhibits their activity. Phosphorylates SLC9A3/NHE3 in response to dexamethasone, resulting in its activation and increased localization at the cell membrane. Phosphorylates CREB1. Necessary for vascular remodeling during angiogenesis. The chain is Serine/threonine-protein kinase Sgk1 (SGK1) from Oryctolagus cuniculus (Rabbit).